The following is a 348-amino-acid chain: Nuclear receptor subfamily 1 group I member 3 (348 aa).

The nuclear receptor DNA-binding region spans 8–83 (PRSCMVCGDR…AGMKKEMILS (76 aa)). An NR C4-type zinc finger spans residues 11–31 (CMVCGDRATGYHFHALTCEGC). Phosphothreonine; by PKC is present on T38. The NR C4-type zinc-finger motif lies at 47 to 71 (CPFAGNCKVNKAQRRHCPACRLQKC). The NR LBD domain maps to 109–348 (GQQELVQTLL…MMPLLQEICS (240 aa)).

The protein belongs to the nuclear hormone receptor family. NR1 subfamily. Heterodimer of NR1I3 and RXR. Interacts with PSMC4. Interacts with ECT2. Directly interacts with DNAJC7; this complex may also include HSP90. Interacts with CRY1. Interacts with CRY2 in a ligand-dependent manner. Post-translationally, phosphorylated at Thr-38 by PKC, dephosphorylation of Thr-38 is required for nuclear translocation and activation.

The protein resides in the nucleus. It is found in the cytoplasm. Its subcellular location is the cytoskeleton. Its function is as follows. Binds and transactivates the retinoic acid response elements that control expression of the retinoic acid receptor beta 2 and alcohol dehydrogenase 3 genes. Transactivates both the phenobarbital responsive element module of the human CYP2B6 gene and the CYP3A4 xenobiotic response element. The sequence is that of Nuclear receptor subfamily 1 group I member 3 (NR1I3) from Callorhinus ursinus (Northern fur seal).